The sequence spans 833 residues: Ventricular zone-expressed PH domain-containing protein 1 (833 aa).

Interaction with TGFBR1 regions lie at residues 201–319 (AELL…LANM) and 663–833 (ESTF…TTYL). One can recognise a PH domain in the interval 716-819 (QPLIEGKLKE…WLQCINVALA (104 aa)).

This sequence belongs to the MELT/VEPH family. As to quaternary structure, interacts with TGFBR1. In terms of tissue distribution, specifically expressed in kidney and eye. In the eye, expressed in retinal pigmented epithelium but not in the neural retina.

The protein localises to the cell membrane. Its function is as follows. Interacts with TGF-beta receptor type-1 (TGFBR1) and inhibits dissociation of activated SMAD2 from TGFBR1, impeding its nuclear accumulation and resulting in impaired TGF-beta signaling. May also affect FOXO, Hippo and Wnt signaling. The sequence is that of Ventricular zone-expressed PH domain-containing protein 1 (Veph1) from Mus musculus (Mouse).